The sequence spans 82 residues: Small, acid-soluble spore protein gamma-type (82 aa).

2 stretches are compositionally biased toward polar residues: residues 1 to 24 (MANS…ASGQ) and 32 to 50 (ASET…SAAG). A disordered region spans residues 1 to 82 (MANSNNKTNA…SAEQNKQQNS (82 aa)). 2 repeats span residues 19-45 (QSAS…KQNQ) and 46-72 (QSAA…QQNQ). The segment covering 69–82 (QQNQSAEQNKQQNS) has biased composition (low complexity).

Belongs to the gamma-type SASP family.

In terms of biological role, SASP are bound to spore DNA. They are double-stranded DNA-binding proteins that cause DNA to change to an a-like conformation. They protect the DNA backbone from chemical and enzymatic cleavage and are thus involved in dormant spore's high resistance to UV light. The chain is Small, acid-soluble spore protein gamma-type from Bacillus subtilis.